We begin with the raw amino-acid sequence, 43 residues long: Protein PsbN (43 aa).

A helical transmembrane segment spans residues 5–27; sequence TLVXISISGSLVSFTGYALYTAF.

The protein belongs to the PsbN family.

It is found in the plastid. The protein localises to the chloroplast thylakoid membrane. In terms of biological role, may play a role in photosystem I and II biogenesis. This chain is Protein PsbN, found in Calycanthus floridus (Eastern sweetshrub).